A 313-amino-acid polypeptide reads, in one-letter code: Acetaldehyde dehydrogenase (313 aa).

12-15 contributes to the NAD(+) binding site; that stretch reads SGNI. The active-site Acyl-thioester intermediate is Cys-132. NAD(+) is bound by residues 163-171 and Asn-291; that span reads SAGPGTRAN.

Belongs to the acetaldehyde dehydrogenase family.

It catalyses the reaction acetaldehyde + NAD(+) + CoA = acetyl-CoA + NADH + H(+). This is Acetaldehyde dehydrogenase (bphG) from Burkholderia cepacia (Pseudomonas cepacia).